Reading from the N-terminus, the 156-residue chain is Small ribosomal subunit protein uS7 (156 aa).

It belongs to the universal ribosomal protein uS7 family. As to quaternary structure, part of the 30S ribosomal subunit. Contacts proteins S9 and S11.

Functionally, one of the primary rRNA binding proteins, it binds directly to 16S rRNA where it nucleates assembly of the head domain of the 30S subunit. Is located at the subunit interface close to the decoding center, probably blocks exit of the E-site tRNA. The protein is Small ribosomal subunit protein uS7 of Halalkalibacterium halodurans (strain ATCC BAA-125 / DSM 18197 / FERM 7344 / JCM 9153 / C-125) (Bacillus halodurans).